A 379-amino-acid polypeptide reads, in one-letter code: DnaJ homolog subfamily B member 14 (379 aa).

The Cytoplasmic segment spans residues 1-244 (MEGNRDEAEK…GHEREEERGD (244 aa)). Residues 55–94 (STAGNSPHCRKPSGGGDQSKPNCTKDSSSGSGESGKGYTK) form a disordered region. The 65-residue stretch at 108 to 172 (NYYEVLGVTK…EKRKQYDLTG (65 aa)) folds into the J domain. The disordered stretch occupies residues 221-241 (GRAGYSNQHQHRHSGHEREEE). A helical membrane pass occupies residues 245–265 (GGFSVFIQLMPIIVLILVSLL). Over 266-379 (SQLMVSNPPY…ERLTSIYKGG (114 aa)) the chain is Lumenal.

The protein belongs to the DnaJ family. DNAJB12/DNAJB14 subfamily. Interacts (via J domain) with HSPA8/Hsc70. Forms a multiprotein complex, at least composed of DNAJB12, DNAJB14, HSPA8/Hsc70 and SGTA; interaction with DNAJB14 and HSPA8/Hsc70 is direct.

It localises to the endoplasmic reticulum membrane. Its subcellular location is the nucleus membrane. Its function is as follows. Acts as a co-chaperone with HSPA8/Hsc70; required to promote protein folding and trafficking, prevent aggregation of client proteins, and promote unfolded proteins to endoplasmic reticulum-associated degradation (ERAD) pathway. Acts by determining HSPA8/Hsc70's ATPase and polypeptide-binding activities. Can also act independently of HSPA8/Hsc70: together with DNAJB12, acts as a chaperone that promotes maturation of potassium channels KCND2 and KCNH2 by stabilizing nascent channel subunits and assembling them into tetramers. While stabilization of nascent channel proteins is dependent on HSPA8/Hsc70, the process of oligomerization of channel subunits is independent of HSPA8/Hsc70. When overexpressed, forms membranous structures together with DNAJB12 and HSPA8/Hsc70 within the nucleus; the role of these structures, named DJANGOs, is still unclear. The polypeptide is DnaJ homolog subfamily B member 14 (DNAJB14) (Bos taurus (Bovine)).